Reading from the N-terminus, the 123-residue chain is Major pollen allergen Ole e 10 (123 aa).

Positions M1–T21 are cleaved as a signal peptide. A disordered region spans residues M1 to W37. An intrachain disulfide couples C38 to C101.

The N-terminus is blocked. In terms of processing, phosphorylated at Ser-24 when expressed as a recombinant protein in a heterologous system. Post-translationally, not glycosylated. Contains two additional disulfide bonds. Expressed in mature and germinating pollen.

It localises to the cytoplasmic vesicle. Functionally, carbohydrate-binding protein binding preferentially 1,3-beta-glucans. May be involved in pollen tube wall re-formation during germination. The protein is Major pollen allergen Ole e 10 of Olea europaea (Common olive).